A 280-amino-acid chain; its full sequence is Pantothenate synthetase (280 aa).

Residue 26–33 (MGNLHEGH) coordinates ATP. H33 serves as the catalytic Proton donor. Residue Q57 coordinates (R)-pantoate. Q57 lines the beta-alanine pocket. An ATP-binding site is contributed by 145–148 (GKKD). Q151 provides a ligand contact to (R)-pantoate. Residues V174 and 182–185 (LSSR) contribute to the ATP site.

The protein belongs to the pantothenate synthetase family. In terms of assembly, homodimer.

It is found in the cytoplasm. The catalysed reaction is (R)-pantoate + beta-alanine + ATP = (R)-pantothenate + AMP + diphosphate + H(+). Its pathway is cofactor biosynthesis; (R)-pantothenate biosynthesis; (R)-pantothenate from (R)-pantoate and beta-alanine: step 1/1. Its function is as follows. Catalyzes the condensation of pantoate with beta-alanine in an ATP-dependent reaction via a pantoyl-adenylate intermediate. The polypeptide is Pantothenate synthetase (Bordetella bronchiseptica (strain ATCC BAA-588 / NCTC 13252 / RB50) (Alcaligenes bronchisepticus)).